The primary structure comprises 237 residues: Probable Bax inhibitor 1 (237 aa).

The Cytoplasmic portion of the chain corresponds to 1–29 (MNVFDRNINFDSLFKFSQISHSTQVHLKN). The chain crosses the membrane as a helical span at residues 30 to 50 (VYSSLAVCMFVAAAGSYVHVV). Residues 51 to 52 (TR) lie on the Lumenal side of the membrane. Residues 53-73 (LFQGGMLSVLGSLGMMFWLAM) traverse the membrane as a helical segment. The Cytoplasmic portion of the chain corresponds to 74 to 86 (TPHNSETEKKRLA). A helical membrane pass occupies residues 87–107 (ILAGFAFLTGVGLCPTLDFVI). At 108–112 (AINPS) the chain is on the lumenal side. Residues 113-133 (IIVTAFLGTSVIFVCFTLSAL) traverse the membrane as a helical segment. Topologically, residues 134–139 (YAKRRS) are cytoplasmic. The chain crosses the membrane as a helical span at residues 140–160 (YLFLGGTLMSGLSILFLMSMM). Residues 161–166 (NMFFGS) lie on the Lumenal side of the membrane. A helical membrane pass occupies residues 167–187 (VMLFKAHMYLGLLIMCGFVLX). Topologically, residues 188–206 (DTQLIIEKAENGDKDYVWH) are cytoplasmic. An intramembrane region (helical) is located at residues 207–227 (SVDLFLDFITIFRKLMVILAL). Over 228-237 (NDKDKKKEKK) the chain is Cytoplasmic.

It belongs to the BI1 family. Highly abundant in testis.

The protein resides in the endoplasmic reticulum membrane. Functionally, suppressor of apoptosis. Modulates unfolded protein response signaling. Modulate ER calcium homeostasis by acting as a calcium-leak channel. The chain is Probable Bax inhibitor 1 (tmbim6) from Paralichthys olivaceus (Bastard halibut).